A 576-amino-acid polypeptide reads, in one-letter code: MDKELFRHQIEVAAKRKKAALVIKHAKVMDVFNQEWIDADVAVENGQIVGIGEYEGEQELDAVGQMLVPGFIDGHVHIESSMVTPAEFSKAVVPHGVTTVVTDPHEIANVSGITGIRFMLEEAKKAALHIYFMLPSCVPAVSFERSGATLKAKDLKPLYQEKEVLGLAEVMDYVGVEQAEEDMLQKLLDAQHENKLIDGHLAGLTDRLINVYRTASVQTDHEVTTAQEALERVKRGMYVMLREGSVAKNVKNVLPAVNEKNARRFFFCTDDKHLDDLMAQGSIDEQVRMSIKEGLDPFLAYQMGSLNAAECFGLKTKGAIAPGYDADFMLVSDFHHVDITSVFIAGELVAQNGEYKPSVEKIAPSPALLQSVHAIDVQEEDIALPITGDQHMNVIRIIPNQLETKLEQVSPSEMNGQFTSDTGRDVLKMVLVERHQGLSEMGVGIVSGFGIKQGAIATTVAHDSHNLIAVGTNDADIIKAIEALKEAGGGLTVVKEGQSLHTLPLPISGLLSDQPAHLVNESLHSLHEALKETGFSLDFNPFLTLSFLALPVIPDVKMTTKGLFDVRNFQHLPIQS.

The protein belongs to the metallo-dependent hydrolases superfamily. Adenine deaminase family. Requires Mn(2+) as cofactor.

The enzyme catalyses adenine + H2O + H(+) = hypoxanthine + NH4(+). This chain is Adenine deaminase, found in Bacillus pumilus (strain SAFR-032).